A 152-amino-acid chain; its full sequence is MKSERQQKILEIIQSEDIETQEELVEKLRELGYDVTQATVSRDIKELRLTKVLTETGKYKYAVLSGPEANITEKLIKVFSESIIKYDTADNLVIIKTITGAAQGAAAAIDSLNWPEVIGTIAGDDTIFIATKGNAAAEKIVERIKAILSQGD.

The protein belongs to the ArgR family.

Its subcellular location is the cytoplasm. It functions in the pathway amino-acid biosynthesis; L-arginine biosynthesis [regulation]. Regulates arginine biosynthesis genes. This is Arginine repressor from Caldicellulosiruptor saccharolyticus (strain ATCC 43494 / DSM 8903 / Tp8T 6331).